A 174-amino-acid polypeptide reads, in one-letter code: ATP synthase subunit b (174 aa).

Residues 9-29 (LPNTSLIFWEVVTFLILLALL) form a helical membrane-spanning segment.

The protein belongs to the ATPase B chain family. As to quaternary structure, F-type ATPases have 2 components, F(1) - the catalytic core - and F(0) - the membrane proton channel. F(1) has five subunits: alpha(3), beta(3), gamma(1), delta(1), epsilon(1). F(0) has three main subunits: a(1), b(2) and c(10-14). The alpha and beta chains form an alternating ring which encloses part of the gamma chain. F(1) is attached to F(0) by a central stalk formed by the gamma and epsilon chains, while a peripheral stalk is formed by the delta and b chains.

The protein localises to the cell membrane. In terms of biological role, f(1)F(0) ATP synthase produces ATP from ADP in the presence of a proton or sodium gradient. F-type ATPases consist of two structural domains, F(1) containing the extramembraneous catalytic core and F(0) containing the membrane proton channel, linked together by a central stalk and a peripheral stalk. During catalysis, ATP synthesis in the catalytic domain of F(1) is coupled via a rotary mechanism of the central stalk subunits to proton translocation. Its function is as follows. Component of the F(0) channel, it forms part of the peripheral stalk, linking F(1) to F(0). The chain is ATP synthase subunit b from Rubrobacter xylanophilus (strain DSM 9941 / JCM 11954 / NBRC 16129 / PRD-1).